Consider the following 163-residue polypeptide: ATP synthase subunit b 1 (163 aa).

Residues 6–26 (LAELWVAVAFLLFVGILIYVG) traverse the membrane as a helical segment.

Belongs to the ATPase B chain family. In terms of assembly, F-type ATPases have 2 components, F(1) - the catalytic core - and F(0) - the membrane proton channel. F(1) has five subunits: alpha(3), beta(3), gamma(1), delta(1), epsilon(1). F(0) has three main subunits: a(1), b(2) and c(10-14). The alpha and beta chains form an alternating ring which encloses part of the gamma chain. F(1) is attached to F(0) by a central stalk formed by the gamma and epsilon chains, while a peripheral stalk is formed by the delta and b chains.

Its subcellular location is the cell inner membrane. Functionally, f(1)F(0) ATP synthase produces ATP from ADP in the presence of a proton or sodium gradient. F-type ATPases consist of two structural domains, F(1) containing the extramembraneous catalytic core and F(0) containing the membrane proton channel, linked together by a central stalk and a peripheral stalk. During catalysis, ATP synthesis in the catalytic domain of F(1) is coupled via a rotary mechanism of the central stalk subunits to proton translocation. In terms of biological role, component of the F(0) channel, it forms part of the peripheral stalk, linking F(1) to F(0). This Xanthobacter autotrophicus (strain ATCC BAA-1158 / Py2) protein is ATP synthase subunit b 1.